A 450-amino-acid polypeptide reads, in one-letter code: Phosphoglucosamine mutase (450 aa).

The active-site Phosphoserine intermediate is the Ser-101. Residues Ser-101, Asp-241, Asp-243, and Asp-245 each coordinate Mg(2+). At Ser-101 the chain carries Phosphoserine.

The protein belongs to the phosphohexose mutase family. Mg(2+) serves as cofactor. Post-translationally, activated by phosphorylation.

The catalysed reaction is alpha-D-glucosamine 1-phosphate = D-glucosamine 6-phosphate. Its function is as follows. Catalyzes the conversion of glucosamine-6-phosphate to glucosamine-1-phosphate. This is Phosphoglucosamine mutase from Lysinibacillus sphaericus (strain C3-41).